The sequence spans 105 residues: Large ribosomal subunit protein bL21 (105 aa).

This sequence belongs to the bacterial ribosomal protein bL21 family. As to quaternary structure, part of the 50S ribosomal subunit. Contacts protein L20.

This protein binds to 23S rRNA in the presence of protein L20. This is Large ribosomal subunit protein bL21 from Porphyromonas gingivalis (strain ATCC BAA-308 / W83).